The chain runs to 312 residues: Acetaldehyde dehydrogenase (312 aa).

12 to 15 provides a ligand contact to NAD(+); that stretch reads SGNI. The Acyl-thioester intermediate role is filled by C132. NAD(+) is bound by residues 163–171 and N290; that span reads SAGPGTRAN.

The protein belongs to the acetaldehyde dehydrogenase family. In terms of assembly, heterotetramer composed of two DmpG (aldolase) and two DmpF (dehydrogenase) subunits, which allows a direct channeling of acetaldehyde between the two active sites.

The catalysed reaction is acetaldehyde + NAD(+) + CoA = acetyl-CoA + NADH + H(+). The protein operates within aromatic compound metabolism; phenol degradation. Is not activated by Mn(2+), Mg(2+), Ca(2+), Zn(2+) or Co(2+). In terms of biological role, catalyzes the conversion of acetaldehyde to acetyl-CoA, using NAD(+) and coenzyme A. Can also act on propanal and butanal to form propanoyl-CoA and butanoyl-CoA, respectively. Is the final enzyme in the meta-cleavage pathway for the degradation of aromatic compounds such as phenols, cresols and catechols. NADP(+) can replace NAD(+) but the rate of reaction is much slower. The protein is Acetaldehyde dehydrogenase (dmpF) of Pseudomonas sp. (strain CF600).